Reading from the N-terminus, the 406-residue chain is Histone-lysine N-methyltransferase SUV39H2 (406 aa).

The region spanning 43 to 101 is the Chromo domain; the sequence is YEVEYLCDYRIEKGVEKFFVKWKGWPESCNTWEPTRNLKCPTLLKQFYSDLYNYFCALK. The region spanning 185–243 is the Pre-SET domain; that stretch reads VGCDCSDCFKGKCCPTEAGVLFAYNEHRQIKIPPGRPIYECNSRCKCGPDCPNRVVQKG. The Zn(2+) site is built by Cys187, Cys189, Cys192, Cys197, Cys198, Cys225, Cys229, Cys231, and Cys235. The SET domain occupies 246 to 369; that stretch reads YSLCIFRTDN…AGEELTFDYQ (124 aa). Residues 257 to 259, Tyr300, and 326 to 327 contribute to the S-adenosyl-L-methionine site; these read RGW and NH. Cys329, Cys394, Cys396, and Cys401 together coordinate Zn(2+). Residues 390–406 enclose the Post-SET domain; the sequence is VRIACKCGAATCRGYLN.

It belongs to the class V-like SAM-binding methyltransferase superfamily. Histone-lysine methyltransferase family. Suvar3-9 subfamily.

It localises to the nucleus. The protein localises to the chromosome. It is found in the centromere. It catalyses the reaction L-lysyl(9)-[histone H3] + 3 S-adenosyl-L-methionine = N(6),N(6),N(6)-trimethyl-L-lysyl(9)-[histone H3] + 3 S-adenosyl-L-homocysteine + 3 H(+). Histone methyltransferase that specifically trimethylates 'Lys-9' of histone H3 using monomethylated H3 'Lys-9' as substrate. H3 'Lys-9' trimethylation represents a specific tag for epigenetic transcriptional repression by recruiting HP1 (CBX1, CBX3 and/or CBX5) proteins to methylated histones. Mainly functions in heterochromatin regions, thereby playing a central role in the establishment of constitutive heterochromatin at pericentric and telomere regions. H3 'Lys-9' trimethylation is also required to direct DNA methylation at pericentric repeats. SUV39H1 is targeted to histone H3 via its interaction with RB1 and is involved in many processes. The sequence is that of Histone-lysine N-methyltransferase SUV39H2 (suv39h2) from Xenopus tropicalis (Western clawed frog).